Reading from the N-terminus, the 133-residue chain is uncharacterized protein (133 aa).

This sequence belongs to the ycf68 family.

The protein resides in the plastid. Its subcellular location is the chloroplast. This is an uncharacterized protein from Oryza sativa subsp. japonica (Rice).